Reading from the N-terminus, the 160-residue chain is Variant surface antigen C (160 aa).

An N-terminal signal peptide occupies residues 1–29 (MKKSIFSKKLLVSFGSLVALASIPLIAIS). Residue C30 is the site of N-palmitoyl cysteine attachment. A lipid anchor (S-diacylglycerol cysteine) is attached at C30. The tract at residues 32-160 (QTNTDKSQQP…SSESGSQKTT (129 aa)) is disordered. 2 stretches are compositionally biased toward low complexity: residues 38–54 (SQQP…QSGT) and 62–87 (SGTS…QTET). Repeat copies occupy residues 86 to 97 (ETAPKSPESGSQ), 98 to 109 (EATPKSPESGSQ), 110 to 121 (EATPKSPESGSQ), 122 to 133 (EAAPKSSESGSQ), 134 to 145 (EAAPKSSESGSQ), and 146 to 157 (EAAPKSSESGSQ). The segment at 86 to 157 (ETAPKSPESG…APKSSESGSQ (72 aa)) is 6 X 12 AA tandem repeats. Residues 93–160 (ESGSQEATPK…SSESGSQKTT (68 aa)) show a composition bias toward polar residues.

The protein localises to the cell membrane. In terms of biological role, responsible for the antigenic diversity for host adaptation. This is Variant surface antigen C (vlpC) from Mesomycoplasma hyorhinis (Mycoplasma hyorhinis).